The primary structure comprises 196 residues: DnaA initiator-associating protein DiaA (196 aa).

Residues 34-196 form the SIS domain; that stretch reads LVHSLLNGNK…DNTLFLHQDD (163 aa).

Belongs to the SIS family. DiaA subfamily. In terms of assembly, homotetramer; dimer of dimers.

In terms of biological role, required for the timely initiation of chromosomal replication via direct interactions with the DnaA initiator protein. This chain is DnaA initiator-associating protein DiaA, found in Salmonella paratyphi A (strain ATCC 9150 / SARB42).